We begin with the raw amino-acid sequence, 379 residues long: Succinyl-diaminopimelate desuccinylase (379 aa).

Histidine 70 contributes to the Zn(2+) binding site. Aspartate 72 is an active-site residue. Position 103 (aspartate 103) interacts with Zn(2+). Glutamate 137 acts as the Proton acceptor in catalysis. Residues glutamate 138, glutamate 166, and histidine 352 each coordinate Zn(2+).

It belongs to the peptidase M20A family. DapE subfamily. In terms of assembly, homodimer. The cofactor is Zn(2+). Co(2+) serves as cofactor.

The enzyme catalyses N-succinyl-(2S,6S)-2,6-diaminopimelate + H2O = (2S,6S)-2,6-diaminopimelate + succinate. The protein operates within amino-acid biosynthesis; L-lysine biosynthesis via DAP pathway; LL-2,6-diaminopimelate from (S)-tetrahydrodipicolinate (succinylase route): step 3/3. Its function is as follows. Catalyzes the hydrolysis of N-succinyl-L,L-diaminopimelic acid (SDAP), forming succinate and LL-2,6-diaminopimelate (DAP), an intermediate involved in the bacterial biosynthesis of lysine and meso-diaminopimelic acid, an essential component of bacterial cell walls. This Paraburkholderia xenovorans (strain LB400) protein is Succinyl-diaminopimelate desuccinylase.